Consider the following 294-residue polypeptide: Undecaprenyl-diphosphatase (294 aa).

The next 6 membrane-spanning stretches (helical) occupy residues 39 to 59 (PGAA…ILYF), 93 to 113 (ATLG…GFTL), 123 to 143 (NLWI…VVDA), 198 to 218 (SFLM…VKAV), 232 to 252 (PTLV…IGFL), and 268 to 288 (IGLA…AIDP).

It belongs to the UppP family.

Its subcellular location is the cell membrane. The enzyme catalyses di-trans,octa-cis-undecaprenyl diphosphate + H2O = di-trans,octa-cis-undecaprenyl phosphate + phosphate + H(+). In terms of biological role, catalyzes the dephosphorylation of undecaprenyl diphosphate (UPP). Confers resistance to bacitracin. This chain is Undecaprenyl-diphosphatase, found in Bifidobacterium longum subsp. infantis (strain ATCC 15697 / DSM 20088 / JCM 1222 / NCTC 11817 / S12).